The primary structure comprises 397 residues: DNA excision repair protein ERCC-8 (397 aa).

WD repeat units follow at residues 41–81, 97–137, 184–224, 243–282, and 332–371; these read IHGS…RQPH, VHKY…AADV, GHRQ…GCLL, AHNGKVNGLCFTSDGLHLLTIGTDNRMRLWNSSSGDNTLV, and GHYKSVDCCVFQPNFQELYSGSRDCNILAWVPPSYEPVPD. Phosphoserine is present on residues Ser-391, Ser-392, and Ser-393.

Part of the CSA complex (also named DCX(ERCC8) complex), a DCX E3 ubiquitin-protein ligase complex containing ERCC8, RBX1, DDB1 and CUL4A; the CSA complex interacts with RNA polymerase II; upon UV irradiation it interacts with the COP9 signalosome and preferentially with the hyperphosphorylated form of RNA polymerase II. Interacts with ERCC6/CSB (via CIM motif); promoting recruitment to lesion-stalled RNA polymerase II (Pol II). Interacts with KIAA1530/UVSSA. Interacts with a subunit of RNA polymerase II TFIIH.

The protein localises to the nucleus. Its subcellular location is the chromosome. It is found in the nucleus matrix. It participates in protein modification; protein ubiquitination. Substrate-recognition component of the CSA complex, a DCX (DDB1-CUL4-X-box) E3 ubiquitin-protein ligase complex, involved in transcription-coupled nucleotide excision repair (TC-NER), a process during which RNA polymerase II-blocking lesions are rapidly removed from the transcribed strand of active genes. Following recruitment to lesion-stalled RNA polymerase II (Pol II), the CSA complex mediates ubiquitination of Pol II subunit POLR2A/RPB1 at 'Lys-1268', a critical TC-NER checkpoint, governing RNA Pol II stability and initiating DNA damage excision by TFIIH recruitment. The CSA complex also promotes the ubiquitination and subsequent proteasomal degradation of ERCC6/CSB in a UV-dependent manner; ERCC6 degradation is essential for the recovery of RNA synthesis after transcription-coupled repair. Also plays a role in DNA double-strand breaks (DSSBs) repair by non-homologous end joining (NHEJ). The protein is DNA excision repair protein ERCC-8 of Mus musculus (Mouse).